A 124-amino-acid polypeptide reads, in one-letter code: Alpha-endosulfine (124 aa).

A Phosphoserine; by GWL modification is found at Ser-74. The disordered stretch occupies residues 99 to 124 (VTGDHIPTPQDLPQRKNTILTSKLAG). Polar residues predominate over residues 113–124 (RKNTILTSKLAG).

The protein belongs to the endosulfine family. In terms of processing, phosphorylation at Ser-74 by gwl during mitosis is essential for interaction with ppp2r2d (PR55-delta) and subsequent inactivation of PP2A.

Its subcellular location is the cytoplasm. Protein phosphatase inhibitor that specifically inhibits protein phosphatase 2A (PP2A) during mitosis. When phosphorylated at Ser-67 during mitosis, specifically interacts with ppp2r2d (PR55-delta) and inhibits its activity, leading to inactivation of PP2A, an essential condition to keep cyclin-B1-CDK1 activity high during M phase. In Danio rerio (Zebrafish), this protein is Alpha-endosulfine (ensa).